Here is a 353-residue protein sequence, read N- to C-terminus: Polyprenal reductase 2 (353 aa).

The next 6 membrane-spanning stretches (helical) occupy residues 11-31, 78-98, 175-195, 234-254, 291-308, and 313-335; these read PLLC…ALPI, FMHF…AIWF, MHIV…LSLA, PLLK…WGSL, YLAE…SGAE, and WFLF…NWYL.

Belongs to the steroid 5-alpha reductase family. Polyprenal reductase subfamily.

The protein localises to the cell membrane. It carries out the reaction a di-trans,poly-cis-dolichal + NADP(+) = a di-trans,poly-cis-polyprenal + NADPH + H(+). The protein operates within protein modification; protein glycosylation. In terms of biological role, plays a key role in early steps of protein N-linked glycosylation by being involved in the conversion of polyprenol into dolichol. Acts as a polyprenal reductase that mediates the reduction of polyprenal into dolichal in a NADP-dependent mechanism. Dolichols are required for the synthesis of dolichol-linked monosaccharides and the oligosaccharide precursor used for N-glycosylation. In Oryza sativa subsp. indica (Rice), this protein is Polyprenal reductase 2.